A 116-amino-acid polypeptide reads, in one-letter code: NADH-ubiquinone oxidoreductase chain 3 (116 aa).

3 helical membrane passes run 3–23, 56–76, and 87–107; these read LITT…TISF, FFLI…LLPL, and LTLI…IYEW.

Belongs to the complex I subunit 3 family.

The protein resides in the mitochondrion membrane. The catalysed reaction is a ubiquinone + NADH + 5 H(+)(in) = a ubiquinol + NAD(+) + 4 H(+)(out). In terms of biological role, core subunit of the mitochondrial membrane respiratory chain NADH dehydrogenase (Complex I) that is believed to belong to the minimal assembly required for catalysis. Complex I functions in the transfer of electrons from NADH to the respiratory chain. The immediate electron acceptor for the enzyme is believed to be ubiquinone. This chain is NADH-ubiquinone oxidoreductase chain 3 (MT-ND3), found in Oncorhynchus keta (Chum salmon).